Here is a 278-residue protein sequence, read N- to C-terminus: Elongation factor Ts (278 aa).

The involved in Mg(2+) ion dislocation from EF-Tu stretch occupies residues 82-85; that stretch reads TDFV.

The protein belongs to the EF-Ts family.

Its subcellular location is the cytoplasm. In terms of biological role, associates with the EF-Tu.GDP complex and induces the exchange of GDP to GTP. It remains bound to the aminoacyl-tRNA.EF-Tu.GTP complex up to the GTP hydrolysis stage on the ribosome. This Streptomyces griseus subsp. griseus (strain JCM 4626 / CBS 651.72 / NBRC 13350 / KCC S-0626 / ISP 5235) protein is Elongation factor Ts.